The chain runs to 480 residues: Dihydrolipoyllysine-residue acetyltransferase component 4 of pyruvate dehydrogenase complex, chloroplastic (480 aa).

A chloroplast-targeting transit peptide spans 1 to 53; sequence MAVSSSSFLSTASLTNSKSNISFASSVSPSLRSVVFRSTTPATSHRRSMTVRS. The Lipoyl-binding domain maps to 55–133; sequence IREIFMPALS…AAIGLLAETE (79 aa). Lys-96 bears the N6-lipoyllysine mark. Disordered regions lie at residues 140–168 and 224–245; these read KSKAASKSSSSVAEAVVPSPPPVTSSPAP and AGIAPSKSSIAPPPPPPPPVTA. Residues 142–156 are compositionally biased toward low complexity; that stretch reads KAASKSSSSVAEAVV. The region spanning 187–224 is the Peripheral subunit-binding (PSBD) domain; it reads VATPYAKKLAKQHKVDIESVAGTGPFGRITASDVETAA. Residues 234-243 are compositionally biased toward pro residues; sequence APPPPPPPPV. The active site involves His-453.

It belongs to the 2-oxoacid dehydrogenase family. (R)-lipoate is required as a cofactor.

It is found in the plastid. The protein localises to the chloroplast stroma. The catalysed reaction is N(6)-[(R)-dihydrolipoyl]-L-lysyl-[protein] + acetyl-CoA = N(6)-[(R)-S(8)-acetyldihydrolipoyl]-L-lysyl-[protein] + CoA. Its function is as follows. The pyruvate dehydrogenase complex catalyzes the overall conversion of pyruvate to acetyl-CoA and CO(2). It contains multiple copies of three enzymatic components: pyruvate dehydrogenase (E1), dihydrolipoamide acetyltransferase (E2) and lipoamide dehydrogenase (E3). This is Dihydrolipoyllysine-residue acetyltransferase component 4 of pyruvate dehydrogenase complex, chloroplastic (LTA2) from Arabidopsis thaliana (Mouse-ear cress).